Reading from the N-terminus, the 417-residue chain is MDTSILAVTTNPKGKNYALAVCWLLGVGCLLAWNSMLTIVDYYAYLFPWYHPSRILTIIYQSFSIGALSVLVHKEARLNTRRRNLFGYSLFSLGSLAVLVLNLATSGRGGIGSFIGVCVISAAFGLADAHVYGGMIGDLSMMTPEFLQSFLAGLAASGALTSGLRLVIKAAFKNSRDGLRKGATLFFAMSASFELVCVLLYAYVFPRIPVVKYYRAKAIIQGSRTVWADLAAGGIQVQPITQDEEALRYDHRLNKGDLMLLYSDLAVTLFLVYLLTFSIFPGFLSEDTGKYSLGDWYALVLIAVFNVSDLVGRYVPMVKKLKMKSRKCLLITSLGRLLLIPAFNITGIYGSQGWMIFLMSVLGLSNGYLTVCVITSAPYDLLAPEQNALGNLLVLYICGGMFAGVACDWLWLVGKDW.

Helical transmembrane passes span 20–40, 52–72, 85–105, 109–129, 144–164, 185–205, 265–285, 292–312, 328–348, 354–374, and 393–413; these read AVCWLLGVGCLLAWNSMLTIV, PSRILTIIYQSFSIGALSVLV, LFGYSLFSLGSLAVLVLNLAT, GGIGSFIGVCVISAAFGLADA, PEFLQSFLAGLAASGALTSGL, LFFAMSASFELVCVLLYAYVF, LAVTLFLVYLLTFSIFPGFLS, SLGDWYALVLIAVFNVSDLVG, CLLITSLGRLLLIPAFNITGI, WMIFLMSVLGLSNGYLTVCVI, and LVLYICGGMFAGVACDWLWLV.

The protein belongs to the SLC29A/ENT transporter (TC 2.A.57) family. Expressed in leaves and flowers.

The protein localises to the cell membrane. In terms of biological role, may be involved in nucleoside transport. In Arabidopsis thaliana (Mouse-ear cress), this protein is Equilibrative nucleotide transporter 2 (ENT2).